We begin with the raw amino-acid sequence, 183 residues long: Translation initiation factor IF-3 (183 aa).

The protein belongs to the IF-3 family. As to quaternary structure, monomer.

Its subcellular location is the cytoplasm. IF-3 binds to the 30S ribosomal subunit and shifts the equilibrium between 70S ribosomes and their 50S and 30S subunits in favor of the free subunits, thus enhancing the availability of 30S subunits on which protein synthesis initiation begins. This is Translation initiation factor IF-3 from Pseudomonas fluorescens (strain SBW25).